The chain runs to 327 residues: GMP reductase (327 aa).

The active-site Thioimidate intermediate is the Cys-175. 204-227 serves as a coordination point for NADP(+); the sequence is IIADGGIRTPGDIAKSIRFGATMV.

This sequence belongs to the IMPDH/GMPR family. GuaC type 2 subfamily.

It carries out the reaction IMP + NH4(+) + NADP(+) = GMP + NADPH + 2 H(+). Catalyzes the irreversible NADPH-dependent deamination of GMP to IMP. It functions in the conversion of nucleobase, nucleoside and nucleotide derivatives of G to A nucleotides, and in maintaining the intracellular balance of A and G nucleotides. This is GMP reductase from Clostridium acetobutylicum (strain ATCC 824 / DSM 792 / JCM 1419 / IAM 19013 / LMG 5710 / NBRC 13948 / NRRL B-527 / VKM B-1787 / 2291 / W).